Here is a 159-residue protein sequence, read N- to C-terminus: Cytochrome b6-f complex subunit 4 (159 aa).

The next 3 membrane-spanning stretches (helical) occupy residues I35 to L55, L93 to E113, and A127 to I147.

The protein belongs to the cytochrome b family. PetD subfamily. In terms of assembly, the 4 large subunits of the cytochrome b6-f complex are cytochrome b6, subunit IV (17 kDa polypeptide, PetD), cytochrome f and the Rieske protein, while the 4 small subunits are PetG, PetL, PetM and PetN. The complex functions as a dimer.

The protein resides in the cell inner membrane. Its function is as follows. Component of the cytochrome b6-f complex, which mediates electron transfer between photosystem II (PSII) and photosystem I (PSI), cyclic electron flow around PSI, and state transitions. This is Cytochrome b6-f complex subunit 4 from Gloeobacter violaceus (strain ATCC 29082 / PCC 7421).